The chain runs to 450 residues: tRNA-2-methylthio-N(6)-dimethylallyladenosine synthase (450 aa).

The MTTase N-terminal domain occupies 8–128 (KRLYIKTYGC…LPELIARAHR (121 aa)). 6 residues coordinate [4Fe-4S] cluster: C17, C53, C91, C166, C170, and C173. One can recognise a Radical SAM core domain in the interval 152–382 (RPTGVTAFLT…QALLEQQQLA (231 aa)). A TRAM domain is found at 385 to 447 (AAQAGRVLPV…RNSLAGVLEL (63 aa)).

This sequence belongs to the methylthiotransferase family. MiaB subfamily. As to quaternary structure, monomer. It depends on [4Fe-4S] cluster as a cofactor.

It is found in the cytoplasm. It catalyses the reaction N(6)-dimethylallyladenosine(37) in tRNA + (sulfur carrier)-SH + AH2 + 2 S-adenosyl-L-methionine = 2-methylsulfanyl-N(6)-dimethylallyladenosine(37) in tRNA + (sulfur carrier)-H + 5'-deoxyadenosine + L-methionine + A + S-adenosyl-L-homocysteine + 2 H(+). Its function is as follows. Catalyzes the methylthiolation of N6-(dimethylallyl)adenosine (i(6)A), leading to the formation of 2-methylthio-N6-(dimethylallyl)adenosine (ms(2)i(6)A) at position 37 in tRNAs that read codons beginning with uridine. This chain is tRNA-2-methylthio-N(6)-dimethylallyladenosine synthase, found in Phenylobacterium zucineum (strain HLK1).